A 455-amino-acid polypeptide reads, in one-letter code: Fumarate hydratase class II (455 aa).

Residues 96 to 98 (SGT), 122 to 125 (HPND), 132 to 134 (SSN), and Thr-180 contribute to the substrate site. Residue His-181 is the Proton donor/acceptor of the active site. The active site involves Ser-311. Substrate contacts are provided by residues Ser-312 and 317–319 (KVN).

Belongs to the class-II fumarase/aspartase family. Fumarase subfamily. In terms of assembly, homotetramer.

It localises to the cytoplasm. The catalysed reaction is (S)-malate = fumarate + H2O. It participates in carbohydrate metabolism; tricarboxylic acid cycle; (S)-malate from fumarate: step 1/1. Involved in the TCA cycle. Catalyzes the stereospecific interconversion of fumarate to L-malate. In Listeria monocytogenes serovar 1/2a (strain ATCC BAA-679 / EGD-e), this protein is Fumarate hydratase class II.